Reading from the N-terminus, the 301-residue chain is NADH-cytochrome b5 reductase 3 (301 aa).

G2 is lipidated: N-myristoyl glycine. One can recognise an FAD-binding FR-type domain in the interval 40-152; sequence DIKYPLRLID…RGPNGLLVYQ (113 aa). K42 carries the N6-acetyllysine modification. Y43 bears the Phosphotyrosine mark. K50 is modified (N6-acetyllysine). Residues R92, P93, Y94, V109, K111, and F114 each coordinate FAD. Position 120 is an N6-acetyllysine (K120). K126, M127, S128, and T185 together coordinate FAD.

This sequence belongs to the flavoprotein pyridine nucleotide cytochrome reductase family. In terms of assembly, component of a complex composed of cytochrome b5, NADH-cytochrome b5 reductase (CYB5R3) and MTARC2. Interacts with MTLN; the interaction is required to maintain cellular lipid composition and leads to stimulation of mitochondrial respiratory complex I activity. The cofactor is FAD. Myristoylated. In terms of tissue distribution, ubiquitously expressed. Expressed only in erythroid tissues, reticulocytes and liver.

It is found in the endoplasmic reticulum membrane. Its subcellular location is the mitochondrion outer membrane. The protein resides in the cytoplasm. The catalysed reaction is 2 Fe(III)-[cytochrome b5] + NADH = 2 Fe(II)-[cytochrome b5] + NAD(+) + H(+). Its function is as follows. Catalyzes the reduction of two molecules of cytochrome b5 using NADH as the electron donor. The chain is NADH-cytochrome b5 reductase 3 from Rattus norvegicus (Rat).